A 290-amino-acid polypeptide reads, in one-letter code: CTP-dependent diacylglycerol kinase 1 (290 aa).

Positions 1 to 33 are disordered; sequence MGTEDAIALPNSTLEPRTEAKQRLSSKSHQVSA. Over 1–77 the chain is Lumenal; the sequence is MGTEDAIALP…FITKHEIPRK (77 aa). N11 carries an N-linked (GlcNAc...) asparagine glycan. Residues 23 to 33 show a composition bias toward polar residues; sequence RLSSKSHQVSA. S44, S45, and S46 each carry phosphoserine. The helical transmembrane segment at 78–95 threads the bilayer; the sequence is VFHSSIGFITLYLYTQGI. Over 96–103 the chain is Cytoplasmic; it reads NYKNVLWP. A helical transmembrane segment spans residues 104–124; it reads LIYAFIILFILDLIRLNWPFF. Residues 125–140 are Lumenal-facing; the sequence is NMLYCRTVGALMRKKE. Residues 141–161 traverse the membrane as a helical segment; it reads IHTYNGVLWYILGLIFSFNFF. The Cytoplasmic portion of the chain corresponds to 162 to 163; the sequence is SK. Residues 164-184 form a helical membrane-spanning segment; it reads DVTLISLFLLSWSDTAAATIG. The Lumenal segment spans residues 185 to 203; it reads RKYGHLTPKVARNKSLAGS. N-linked (GlcNAc...) asparagine glycosylation is present at N197. A helical transmembrane segment spans residues 204–224; that stretch reads IAAFTVGVITCWVFYGYFVPA. Residues 225–244 are Cytoplasmic-facing; sequence YSYVNKPGEIQWSPETSRLS. The helical transmembrane segment at 245–265 threads the bilayer; that stretch reads LNMLSLLGGVVAALSEGIDLF. The Lumenal portion of the chain corresponds to 266–290; it reads NWDDNFTIPVLSSLFMNAVIKTFKK. An N-linked (GlcNAc...) asparagine glycan is attached at N270.

This sequence belongs to the DGK1 family. Requires Ca(2+) as cofactor. It depends on Mg(2+) as a cofactor. Post-translationally, CKII-mediated phosphorylation of Ser-45 and Ser-46 regulates its function in the production of PA.

The protein localises to the endoplasmic reticulum membrane. It is found in the nucleus membrane. The catalysed reaction is a 1,2-diacyl-sn-glycerol + CTP = a 1,2-diacyl-sn-glycero-3-phosphate + CDP + H(+). It catalyses the reaction 1,2-di-(9Z-octadecenoyl)-sn-glycerol + CTP = 1,2-di-(9Z-octadecenoyl)-sn-glycero-3-phosphate + CDP + H(+). Its activity is regulated as follows. Inhibited by N-ethylmaleimide, dCTP, and sphingoid bases including sphinganine, sphingosine and phytosphingosine. DAG pyrophosphate, cardiolipin, CDP-DAG, and lyso-PA inhibited activity by 23-66%. Also inhibited by Ca(2+) concentrations of more than 1 mM, by addition of EDTA or EGTA at 5 mM, and by 5 mM Mn(2+) and Zn(2+). Stimulated by major membrane phospholipids including phosphatidylcholine, phosphatidylethanolamine, phosphatidylinositol, phosphatidylserine, phosphatidylglycerol, and phosphatidate. Also stimulated to a maximum by addition of TritonX-100 at a concentration of 1 mM, followed by an apparent inhibition of activity at concentrations above 1 mM. CTP-dependent diacylglycerol kinase that catalyzes the phosphorylation of diacylglycerol (DAG) to phosphatidate (PA). Controls phosphatidate levels at the nuclear envelope. Counteracts the activity of PA phosphatase PAH1/SMP2, controlling the levels of PA and DAG for the synthesis of triacylglycerol and membrane phospholipids. May be involved in vesicle trafficking between the endoplasmic reticulum and the Golgi apparatus. Required to convert triacylglycerol-derived DAG to PA for phospholipid synthesis during growth resumption from stationary phase in the absence of de novo fatty acid synthesis. Involved in the resistance to nickel chloride and nalidixic acid. The chain is CTP-dependent diacylglycerol kinase 1 (DGK1) from Saccharomyces cerevisiae (strain ATCC 204508 / S288c) (Baker's yeast).